The sequence spans 334 residues: F-box only protein 16 (334 aa).

The F-box domain maps to Leu86–Lys132. Disordered regions lie at residues Pro168–Ser222 and Leu314–Ser334. Residues Ser194 to Ser204 show a composition bias toward low complexity. Residues Asn210–Ser222 are compositionally biased toward basic and acidic residues. A compositionally biased stretch (low complexity) spans Leu323 to Ser334.

As to quaternary structure, part of a SCF (SKP1-cullin-F-box) protein ligase complex.

Its function is as follows. Probably recognizes and binds to some phosphorylated proteins and promotes their ubiquitination and degradation. This is F-box only protein 16 (Fbxo16) from Mus musculus (Mouse).